We begin with the raw amino-acid sequence, 1037 residues long: Receptor kinase-like protein Xa21 (1037 aa).

Positions M1 to S24 are cleaved as a signal peptide. Residues D25–V665 are Extracellular-facing. Residues N66, N101, and N112 are each glycosylated (N-linked (GlcNAc...) asparagine). LRR repeat units lie at residues P89–N112, L113–L137, S138–C161, K163–S185, K187–L210, T211–L234, S236–L259, S260–T283, H285–A308, H310–R331, and R333–F355. A glycan (N-linked (GlcNAc...) asparagine) is linked at N209. N-linked (GlcNAc...) asparagine glycosylation is found at N247 and N258. N307 is a glycosylation site (N-linked (GlcNAc...) asparagine). Residues N334, N361, and N385 are each glycosylated (N-linked (GlcNAc...) asparagine). LRR repeat units lie at residues C362–N385, S387–L411, I412–L435, N437–L459, T460–N482, L483–I507, T509–L532, K533–C556, Q557–L580, K581–I604, and M606–D629. N-linked (GlcNAc...) asparagine glycosylation is found at N447, N458, N482, N495, and N515. 2 N-linked (GlcNAc...) asparagine glycosylation sites follow: N592 and N611. A helical transmembrane segment spans residues L666–I686. Over T687 to F1037 the chain is Cytoplasmic. A Nuclear localization signal motif is present at residues H689–K694. At S698 the chain carries Phosphoserine. The residue at position 700 (T700) is a Phosphothreonine. Residue S701 is modified to Phosphoserine. The residue at position 717 (T717) is a Phosphothreonine. Residues F720 to I1019 enclose the Protein kinase domain. Residues L726–V734 and K748 each bind ATP. D854 serves as the catalytic Proton acceptor.

Belongs to the protein kinase superfamily. Ser/Thr protein kinase family. As to quaternary structure, interacts with WRKY62/XB10 in the nucleus. Interacts with SERK2. Mn(2+) serves as cofactor. Mg(2+) is required as a cofactor. In terms of processing, undergoes protein cleavage upon X.oryzae pv. oryzae protein Ax21 detection, thus releasing the processed protein kinase Xa21 chain. Autophosphorylated on serine and threonine residues; these phosphorylation prevents proteolytic degradation.

Its subcellular location is the cell membrane. It is found in the endoplasmic reticulum membrane. It localises to the nucleus. The enzyme catalyses L-seryl-[protein] + ATP = O-phospho-L-seryl-[protein] + ADP + H(+). The catalysed reaction is L-threonyl-[protein] + ATP = O-phospho-L-threonyl-[protein] + ADP + H(+). Receptor kinase that detects X.oryzae pv. oryzae protein Ax21 to promote innate immunity. Following X.oryzae pv. oryzae protein Ax21 detection, undergoes cleavage, releasing the processed protein kinase Xa21 chain. Its function is as follows. The processed protein kinase Xa21 chain released by protein cleavage after X.oryzae pv. oryzae protein Ax21 detection translocates into the nucleus where it can bind and regulate WRKY62, a transcription factor. Confers resistance to the bacterial pathogen X.oryzae pv. oryzae (Xoo). This Oryza sativa subsp. japonica (Rice) protein is Receptor kinase-like protein Xa21.